The sequence spans 281 residues: Short neuropeptide F (281 aa).

An N-terminal signal peptide occupies residues 1–30; sequence MFHLKRELSQGCALALICLVSLQMQQPAQA. Residues 31-64 constitute a propeptide that is removed on maturation; that stretch reads EVSSAQGTPLSNLYDNLLQREYAGPVVFPNHQVE. Phenylalanine amide occurs at positions 77 and 111. A propeptide spanning residues 115–165 is cleaved from the precursor; that stretch reads DPSLPQMRRTAYDDLLERELTLNSQQQQQQLGTEPDSDLGADYDGLYERVV. Residues 137 to 156 form a disordered region; sequence NSQQQQQQLGTEPDSDLGAD. W173 is subject to Tryptophan amide. Positions 176-246 are excised as a propeptide; that stretch reads SVPQFEANNA…NDTSEFQREV (71 aa). A disordered region spans residues 226 to 281; sequence ANDEDTDTDLNNDTSEFQREVRKPMRLRWGRSTGKAPSEQKHTPEETSSIPPKTQN. At W254 the chain carries Tryptophan amide. The propeptide occupies 257-281; it reads STGKAPSEQKHTPEETSSIPPKTQN. The segment covering 271–281 has biased composition (polar residues); the sequence is ETSSIPPKTQN.

Belongs to the NPY family. In terms of tissue distribution, stage 17 embryos show expression in the two brain hemispheres (neural cells located in the dorsal posterior region), the connected ventral ganglion (pairs of neural cells along the ventral midline) and the peripheral nervous system (expressed in the antennal-maxillary sensory cells). In the brain hemispheres of the feeding third instar larva, expression in neural cells is located in the dorsal-anterior region of the protocerebrum. In the larval ventral ganglion, expression is seen in the neural cells located in the subesophagial region, along the ventral midline and in thoracic and abdominal segments. In the adult brain, expression is seen in the medulla and the mushroom body calyx (at protein level).

The protein resides in the secreted. Functionally, plays a role in controlling food intake and regulating body size. This Drosophila melanogaster (Fruit fly) protein is Short neuropeptide F (sNPF).